Here is a 370-residue protein sequence, read N- to C-terminus: Putative methylthioribose-1-phosphate isomerase (370 aa).

Residues 66 to 68 (RGA), R109, and Q217 each bind substrate. The active-site Proton donor is D258. 268-269 (NK) lines the substrate pocket.

It belongs to the eIF-2B alpha/beta/delta subunits family. MtnA subfamily.

The enzyme catalyses 5-(methylsulfanyl)-alpha-D-ribose 1-phosphate = 5-(methylsulfanyl)-D-ribulose 1-phosphate. Catalyzes the interconversion of methylthioribose-1-phosphate (MTR-1-P) into methylthioribulose-1-phosphate (MTRu-1-P). This Aeropyrum pernix (strain ATCC 700893 / DSM 11879 / JCM 9820 / NBRC 100138 / K1) protein is Putative methylthioribose-1-phosphate isomerase.